The sequence spans 3083 residues: Laminin subunit alpha-1 (3083 aa).

The first 24 residues, 1-24 (MRGSGTGAALLVLLASVLWVTVRS), serve as a signal peptide directing secretion. Position 25 is a pyrrolidone carboxylic acid (Gln25). Residues 25-276 (QQRGLFPAIL…SIKDISVGGM (252 aa)) form the Laminin N-terminal domain. 6 disulfide bridges follow: Cys277-Cys286, Cys279-Cys297, Cys299-Cys308, Cys311-Cys331, Cys334-Cys343, and Cys336-Cys368. Laminin EGF-like domains follow at residues 277 to 333 (CICY…ECEE), 334 to 403 (CNCH…PCRP), 404 to 460 (CNCD…NCIP), and 461 to 509 (CDCR…GCSE). N-linked (GlcNAc...) asparagine glycosylation occurs at Asn370. Cystine bridges form between Cys371–Cys380, Cys383–Cys401, Cys404–Cys416, Cys406–Cys434, Cys436–Cys445, Cys448–Cys458, Cys461–Cys474, Cys463–Cys478, Cys480–Cys489, and Cys492–Cys507. Positions 510–519 (CFCFGVSGVC) constitute a Laminin EGF-like 5; first part domain. In terms of domain architecture, Laminin IV type A 1 spans 523–715 (TWSISQVTNM…DLAVAADVEH (193 aa)). Asn672 is a glycosylation site (N-linked (GlcNAc...) asparagine). Residues 716 to 748 (CECPQGYTGTSCEACLPGYYRVDGILFGGICQP) form the Laminin EGF-like 5; second part domain. Disulfide bonds link Cys749–Cys758, Cys751–Cys764, Cys767–Cys776, Cys779–Cys795, Cys798–Cys813, Cys800–Cys823, Cys826–Cys835, Cys838–Cys853, Cys856–Cys870, Cys858–Cys877, Cys880–Cys889, Cys892–Cys906, Cys909–Cys921, Cys911–Cys928, Cys930–Cys939, Cys942–Cys955, Cys958–Cys970, Cys960–Cys976, Cys978–Cys987, Cys990–Cys1002, Cys1005–Cys1014, Cys1007–Cys1021, Cys1023–Cys1032, Cys1035–Cys1048, Cys1051–Cys1063, Cys1053–Cys1070, Cys1072–Cys1081, Cys1084–Cys1094, Cys1097–Cys1109, Cys1099–Cys1125, Cys1127–Cys1136, and Cys1139–Cys1154. Laminin EGF-like domains follow at residues 749-797 (CECH…DCQP), 798-855 (CACP…TCVP), 856-908 (CNCS…NCRA), 909-957 (CDCH…GCVP), 958-1004 (CNCS…GCTP), 1005-1050 (CDCA…GCQA), 1051-1096 (CNCS…DCVP), and 1097-1156 (CGCD…GCSP). A Cell attachment site motif is present at residues 1147–1149 (RGD). The Laminin EGF-like 14; first part domain occupies 1157-1166 (CFCFGLSQLC). The region spanning 1177–1368 (ITLASDQPLL…EGEAALLLEL (192 aa)) is the Laminin IV type A 2 domain. The N-linked (GlcNAc...) asparagine glycan is linked to Asn1344. The Laminin EGF-like 14; second part domain occupies 1369–1409 (CVCPPGTAGHSCQDCAPGYYREKLPESGGRGPRPLLAPCVP). Cystine bridges form between Cys1410–Cys1419, Cys1412–Cys1426, Cys1429–Cys1438, Cys1441–Cys1456, Cys1459–Cys1473, Cys1461–Cys1483, Cys1486–Cys1495, Cys1498–Cys1513, Cys1516–Cys1528, Cys1518–Cys1535, Cys1537–Cys1546, and Cys1549–Cys1560. Laminin EGF-like domains are found at residues 1410–1458 (CNCN…DCTP), 1459–1515 (CTCP…SCQT), and 1516–1562 (CDCN…DCVS). The domain II and I stretch occupies residues 1564-2123 (DDDCVGPLLN…SRARKQVASI (560 aa)). Residues 1617–1691 (AKKIRAEIQL…VATLNQTARK (75 aa)) adopt a coiled-coil conformation. Residues Asn1659, Asn1686, Asn1718, Asn1725, Asn1763, and Asn1811 are each glycosylated (N-linked (GlcNAc...) asparagine). Residues 1723 to 1809 (QQNATLELKA…QEKKLRVQEE (87 aa)) are a coiled coil. Residues 1868–1901 (KRRARDLVHRAEQHASELQSRAGALDRDLENVRN) are a coiled coil. Asn1935, Asn2026, Asn2045, and Asn2066 each carry an N-linked (GlcNAc...) asparagine glycan. 5 consecutive Laminin G-like domains span residues 2124–2304 (KVAV…CNGC), 2312–2488 (DSSF…RKGC), 2493–2679 (IQSV…LDTC), 2721–2893 (AHQF…VDRC), and 2898–3078 (QEGT…PHSC). A disulfide bridge links Cys2278 with Cys2304. The N-linked (GlcNAc...) asparagine glycan is linked to Asn2355. Intrachain disulfides connect Cys2464-Cys2488 and Cys2652-Cys2679. Asn2834 carries N-linked (GlcNAc...) asparagine glycosylation. Cys2868 and Cys2893 are oxidised to a cystine. N-linked (GlcNAc...) asparagine glycosylation occurs at Asn2923. A disulfide bond links Cys3047 and Cys3078.

As to quaternary structure, laminin is a complex glycoprotein, consisting of three different polypeptide chains (alpha, beta, gamma), which are bound to each other by disulfide bonds into a cross-shaped molecule comprising one long and three short arms with globules at each end. Alpha-1 is a subunit of laminin-1 (laminin-111 or EHS laminin) and laminin-3 (laminin-121 or S-laminin). Tyrosine phosphorylated by PKDCC/VLK.

The protein resides in the secreted. The protein localises to the extracellular space. Its subcellular location is the extracellular matrix. It is found in the basement membrane. In terms of biological role, binding to cells via a high affinity receptor, laminin is thought to mediate the attachment, migration and organization of cells into tissues during embryonic development by interacting with other extracellular matrix components. This is Laminin subunit alpha-1 (Lama1) from Mus musculus (Mouse).